A 469-amino-acid chain; its full sequence is UDP-N-acetylmuramate--L-alanine ligase (469 aa).

120–126 (GTHGKTT) serves as a coordination point for ATP.

The protein belongs to the MurCDEF family.

The protein localises to the cytoplasm. The catalysed reaction is UDP-N-acetyl-alpha-D-muramate + L-alanine + ATP = UDP-N-acetyl-alpha-D-muramoyl-L-alanine + ADP + phosphate + H(+). It functions in the pathway cell wall biogenesis; peptidoglycan biosynthesis. Its function is as follows. Cell wall formation. This Acetivibrio thermocellus (strain ATCC 27405 / DSM 1237 / JCM 9322 / NBRC 103400 / NCIMB 10682 / NRRL B-4536 / VPI 7372) (Clostridium thermocellum) protein is UDP-N-acetylmuramate--L-alanine ligase.